Consider the following 588-residue polypeptide: Aspartate--tRNA ligase (588 aa).

Glu-174 is an L-aspartate binding site. An aspartate region spans residues 198–201 (QLFK). Residue Arg-220 participates in L-aspartate binding. Residues 220 to 222 (RDE) and Gln-229 contribute to the ATP site. His-448 is an L-aspartate binding site. Glu-482 provides a ligand contact to ATP. Arg-489 provides a ligand contact to L-aspartate. ATP is bound at residue 534-537 (GIDR).

Belongs to the class-II aminoacyl-tRNA synthetase family. Type 1 subfamily. Homodimer.

The protein resides in the cytoplasm. It carries out the reaction tRNA(Asp) + L-aspartate + ATP = L-aspartyl-tRNA(Asp) + AMP + diphosphate. In terms of biological role, catalyzes the attachment of L-aspartate to tRNA(Asp) in a two-step reaction: L-aspartate is first activated by ATP to form Asp-AMP and then transferred to the acceptor end of tRNA(Asp). The chain is Aspartate--tRNA ligase from Xanthomonas euvesicatoria pv. vesicatoria (strain 85-10) (Xanthomonas campestris pv. vesicatoria).